A 1168-amino-acid polypeptide reads, in one-letter code: Transcription-repair-coupling factor (1168 aa).

The Helicase ATP-binding domain maps to 633–794 (DMQKSRPMDR…MLGVRDLSVI (162 aa)). Position 646 to 653 (646 to 653 (GDVGYGKT)) interacts with ATP. Positions 747-750 (DEEQ) match the DEEQ box motif. The Helicase C-terminal domain occupies 808–969 (VLEQNMSFIK…GFKIAMRDLN (162 aa)).

The protein in the N-terminal section; belongs to the UvrB family. It in the C-terminal section; belongs to the helicase family. RecG subfamily.

It localises to the cytoplasm. Couples transcription and DNA repair by recognizing RNA polymerase (RNAP) stalled at DNA lesions. Mediates ATP-dependent release of RNAP and its truncated transcript from the DNA, and recruitment of nucleotide excision repair machinery to the damaged site. The protein is Transcription-repair-coupling factor of Staphylococcus aureus (strain Mu50 / ATCC 700699).